An 85-amino-acid chain; its full sequence is Antibacterial factor-related peptide 2 (85 aa).

The N-terminal stretch at 1-17 (MFVRSLFLALLLATIVA) is a signal peptide. Positions 82–85 (IKRG) are excised as a propeptide.

In terms of tissue distribution, expressed in the pharynx (at protein level). Detected in pharyngeal neurons and secretory cells.

Its subcellular location is the secreted. Functionally, exhibits antimicrobial activity against the Gram-positive bacteria B.subtilis IFO 3134, K.varians MAFF 118076 and S.aureus ATCC 6538P, the Gram-negative bacteria A.tumefaciens MAFF 1001, B.bacteriovorus MAFF 106101 and K.pneumoniae MAFF 519002, and the yeasts C.krusei MAFF 114085, K.thermotolerans MAFF 113848 and T.delbrueckii MAFF 113811. The chain is Antibacterial factor-related peptide 2 from Caenorhabditis elegans.